A 622-amino-acid polypeptide reads, in one-letter code: Pentatricopeptide repeat-containing protein At5g06540 (622 aa).

10 PPR repeats span residues 81–115 (NLFV…RIWP), 116–150 (DNIT…GFQN), 151–181 (DVYV…MGFR), 182–212 (DVVS…MPHR), 213–247 (NLFT…GVVA), 248–282 (NETV…HMTV), 283–313 (NLIL…LPET), 314–348 (DSLS…GFIP), 349–384 (RDVT…GIEP), and 385–419 (RLEH…PNAP). Residues 420–495 (ILGALLGACK…PPGWSLIEID (76 aa)) form a type E motif region. Residues 496 to 527 (GKINKFTMGDDQKHPEMGKIRRKWEEILGKIR) form a type E(+) motif region. A type DYW motif region spans residues 528–622 (LIGYKGNTGD…NGVCSCRDYW (95 aa)).

This sequence belongs to the PPR family. PCMP-H subfamily.

In Arabidopsis thaliana (Mouse-ear cress), this protein is Pentatricopeptide repeat-containing protein At5g06540 (PCMP-H88).